Reading from the N-terminus, the 268-residue chain is Taurine import ATP-binding protein TauB (268 aa).

Positions 4-236 constitute an ABC transporter domain; the sequence is LSIENISMRF…MGVNADLREV (233 aa). Residue 41-48 coordinates ATP; the sequence is GPSGCGKT.

This sequence belongs to the ABC transporter superfamily. Taurine importer (TC 3.A.1.17.1) family. As to quaternary structure, the complex is composed of two ATP-binding proteins (TauB), two transmembrane proteins (TauC) and a solute-binding protein (TauA).

Its subcellular location is the cell inner membrane. It catalyses the reaction taurine(out) + ATP + H2O = taurine(in) + ADP + phosphate + H(+). Functionally, part of the ABC transporter complex TauABC involved in taurine import. Responsible for energy coupling to the transport system. This is Taurine import ATP-binding protein TauB from Ruegeria pomeroyi (strain ATCC 700808 / DSM 15171 / DSS-3) (Silicibacter pomeroyi).